A 743-amino-acid polypeptide reads, in one-letter code: Polyribonucleotide nucleotidyltransferase (743 aa).

Residues D494 and D500 each contribute to the Mg(2+) site. One can recognise a KH domain in the interval 561–620 (PQHAEVFVNPDIIRLIIGPGGKNIKAITAATGASVDIEDSGRVSIFAPTAEALEKAREMV). The S1 motif domain maps to 630 to 704 (GKNYNAKVRK…SRKAVLLEEQ (75 aa)). Residues 702–743 (EEQGHPWNPEDTARPQRSDRGDRGDRRGDRGGRDRRDRGDRR) form a disordered region. Basic and acidic residues predominate over residues 712–743 (DTARPQRSDRGDRGDRRGDRGGRDRRDRGDRR).

The protein belongs to the polyribonucleotide nucleotidyltransferase family. The cofactor is Mg(2+).

It localises to the cytoplasm. The catalysed reaction is RNA(n+1) + phosphate = RNA(n) + a ribonucleoside 5'-diphosphate. Its function is as follows. Involved in mRNA degradation. Catalyzes the phosphorolysis of single-stranded polyribonucleotides processively in the 3'- to 5'-direction. This Desulfovibrio desulfuricans (strain ATCC 27774 / DSM 6949 / MB) protein is Polyribonucleotide nucleotidyltransferase.